A 384-amino-acid chain; its full sequence is Probable tRNA sulfurtransferase (384 aa).

A THUMP domain is found at 57–160 (EEVVDRVRNV…KKTYIYSKRI (104 aa)). Residues 177–178 (ML), 202–203 (YF), R259, G281, and Q290 contribute to the ATP site.

This sequence belongs to the ThiI family.

The protein localises to the cytoplasm. It catalyses the reaction [ThiI sulfur-carrier protein]-S-sulfanyl-L-cysteine + a uridine in tRNA + 2 reduced [2Fe-2S]-[ferredoxin] + ATP + H(+) = [ThiI sulfur-carrier protein]-L-cysteine + a 4-thiouridine in tRNA + 2 oxidized [2Fe-2S]-[ferredoxin] + AMP + diphosphate. The catalysed reaction is [ThiS sulfur-carrier protein]-C-terminal Gly-Gly-AMP + S-sulfanyl-L-cysteinyl-[cysteine desulfurase] + AH2 = [ThiS sulfur-carrier protein]-C-terminal-Gly-aminoethanethioate + L-cysteinyl-[cysteine desulfurase] + A + AMP + 2 H(+). It participates in cofactor biosynthesis; thiamine diphosphate biosynthesis. Catalyzes the ATP-dependent transfer of a sulfur to tRNA to produce 4-thiouridine in position 8 of tRNAs, which functions as a near-UV photosensor. Also catalyzes the transfer of sulfur to the sulfur carrier protein ThiS, forming ThiS-thiocarboxylate. This is a step in the synthesis of thiazole, in the thiamine biosynthesis pathway. The sulfur is donated as persulfide by IscS. The chain is Probable tRNA sulfurtransferase from Clostridium acetobutylicum (strain ATCC 824 / DSM 792 / JCM 1419 / IAM 19013 / LMG 5710 / NBRC 13948 / NRRL B-527 / VKM B-1787 / 2291 / W).